The following is a 202-amino-acid chain: Securin (202 aa).

Residue Ala2 is modified to N-acetylalanine. Positions 35 to 90 are disordered; sequence LDGRSQVSTPRFGKTFDAPPALPKATRKALGTVNRATEKSVKTKGPLKQKQPSFSA. The short motif at 61–64 is the D-box element; that stretch reads RKAL. 2 short sequence motifs (TEK-box) span residues 71–73 and 94–96; these read TEK. Positions 163–173 match the SH3-binding motif; it reads PPSPVKMPSPP. Ser165 carries the phosphoserine; by CDK1 modification.

Belongs to the securin family. As to quaternary structure, interacts with RPS10 and DNAJA1. Interacts with the caspase-like ESPL1, and prevents its protease activity probably by covering its active site. Interacts with TP53 and blocks its activity probably by blocking its binding to DNA. Interacts with the Ku 70 kDa subunit of ds-DNA kinase. Interacts with PTTG1IP. Post-translationally, phosphorylated at Ser-165 by CDK1 during mitosis. In terms of processing, phosphorylated in vitro by ds-DNA kinase. Ubiquitinated through 'Lys-11' linkage of ubiquitin moieties by the anaphase promoting complex (APC) at the onset of anaphase, conducting to its degradation. 'Lys-11'-linked ubiquitination is mediated by the E2 ligase UBE2C/UBCH10. Expressed at low level in most tissues, except in adult testis, where it is highly expressed. Overexpressed in many patients suffering from pituitary adenomas, primary epithelial neoplasias, and esophageal cancer.

It is found in the cytoplasm. The protein resides in the nucleus. Its function is as follows. Regulatory protein, which plays a central role in chromosome stability, in the p53/TP53 pathway, and DNA repair. Probably acts by blocking the action of key proteins. During the mitosis, it blocks Separase/ESPL1 function, preventing the proteolysis of the cohesin complex and the subsequent segregation of the chromosomes. At the onset of anaphase, it is ubiquitinated, conducting to its destruction and to the liberation of ESPL1. Its function is however not limited to a blocking activity, since it is required to activate ESPL1. Negatively regulates the transcriptional activity and related apoptosis activity of TP53. The negative regulation of TP53 may explain the strong transforming capability of the protein when it is overexpressed. May also play a role in DNA repair via its interaction with Ku, possibly by connecting DNA damage-response pathways with sister chromatid separation. The polypeptide is Securin (PTTG1) (Homo sapiens (Human)).